The following is a 123-amino-acid chain: Histone H2B.1/H2B.2 (123 aa).

The interval M1–K30 is disordered. An O-linked (GlcNAc) serine glycan is attached at S110. A Glycyl lysine isopeptide (Lys-Gly) (interchain with G-Cter in ubiquitin) cross-link involves residue K118.

This sequence belongs to the histone H2B family. As to quaternary structure, the nucleosome is a histone octamer containing two molecules each of H2A, H2B, H3 and H4 assembled in one H3-H4 heterotetramer and two H2A-H2B heterodimers. The octamer wraps approximately 147 bp of DNA. In terms of processing, monoubiquitination of Lys-118 gives a specific tag for epigenetic transcriptional activation and is also prerequisite for histone H3 'Lys-4' and 'Lys-79' methylation. Post-translationally, glcNAcylation at Ser-110 promotes monoubiquitination of Lys-118. It fluctuates in response to extracellular glucose, and associates with transcribed genes.

The protein localises to the nucleus. Its subcellular location is the chromosome. Its function is as follows. Core component of nucleosome. Nucleosomes wrap and compact DNA into chromatin, limiting DNA accessibility to the cellular machineries which require DNA as a template. Histones thereby play a central role in transcription regulation, DNA repair, DNA replication and chromosomal stability. DNA accessibility is regulated via a complex set of post-translational modifications of histones, also called histone code, and nucleosome remodeling. The chain is Histone H2B.1/H2B.2 from Tigriopus californicus (Marine copepod).